The sequence spans 397 residues: Zinc finger CCCH domain-containing protein 33 (397 aa).

5 C3H1-type zinc fingers span residues 40–68 (RPGE…HPRD), 85–113 (RIGQ…HPRN), 131–159 (RSNE…HPQP), 274–302 (RPGQ…HPRD), and 320–348 (RPGE…HPMR). Residues 361–397 (EVVETSTGKSRRLSVSETRQAATTSSGKDTTIDNTQQ) form a disordered region. Positions 364-397 (ETSTGKSRRLSVSETRQAATTSSGKDTTIDNTQQ) are enriched in polar residues.

It localises to the nucleus. The chain is Zinc finger CCCH domain-containing protein 33 (ZFN1) from Arabidopsis thaliana (Mouse-ear cress).